A 676-amino-acid polypeptide reads, in one-letter code: Protein cereblon (676 aa).

Over residues methionine 1 to glutamate 11 the composition is skewed to acidic residues. Disordered stretches follow at residues methionine 1–histidine 78, glutamate 118–arginine 194, and aspartate 249–aspartate 276. Low complexity-rich tracts occupy residues threonine 12–alanine 33 and valine 125–alanine 139. Residues leucine 156 to serine 177 are compositionally biased toward polar residues. The 229-residue stretch at arginine 314–serine 542 folds into the Lon N-terminal domain. Positions glutamate 541–lysine 650 constitute a CULT domain. Positions 546, 549, 615, and 618 each coordinate Zn(2+).

It belongs to the CRBN family. In terms of assembly, likely a component of a DCX (DDB1-CUL4-X-box) protein ligase complex. May interact with pic/DDB1. Post-translationally, ubiquitinated.

Its subcellular location is the nucleus. Its pathway is protein modification; protein ubiquitination. In terms of biological role, substrate recognition component of a DCX (DDB1-CUL4-X-box) E3 protein ligase complex that mediates the ubiquitination and subsequent proteasomal degradation of target proteins. Has an essential role in mediating growth by negatively regulating insulin signaling. It also has a role in maintaining presynaptic function in the neuromuscular junction synapses of third-instar larvae. The polypeptide is Protein cereblon (Drosophila mojavensis (Fruit fly)).